The sequence spans 1104 residues: Receptor-type guanylate cyclase gcy-15 (1104 aa).

At 1 to 431 (MEIAINRLNA…ENCGPPANNT (431 aa)) the chain is on the extracellular side. Asparagine 43, asparagine 237, asparagine 263, asparagine 287, asparagine 407, and asparagine 429 each carry an N-linked (GlcNAc...) asparagine glycan. A helical transmembrane segment spans residues 432–452 (FIIVISVGVAVLIGLAIAAAF). The Cytoplasmic segment spans residues 453–1104 (LYKRYRYERR…QIQEKTYEFS (652 aa)). Residues 528–823 (FNTGSTARAG…QIKRKLKPLT (296 aa)) form the Protein kinase domain. ATP is bound by residues 534 to 542 (ARAGPFGPI) and lysine 576. Residues 838 to 871 (IEKYTDKLEKDIAERNEELEAEKAKSEALLKMML) are a coiled coil. The Guanylate cyclase domain maps to 894 to 1024 (TVFFSDCPGF…DTVNTASRME (131 aa)).

The protein belongs to the adenylyl cyclase class-4/guanylyl cyclase family. In terms of tissue distribution, expressed bilaterally in ASG sensory neurons.

It localises to the cell membrane. It catalyses the reaction GTP = 3',5'-cyclic GMP + diphosphate. Functionally, guanylate cyclase involved in the production of the second messenger cGMP. This is Receptor-type guanylate cyclase gcy-15 from Caenorhabditis elegans.